We begin with the raw amino-acid sequence, 49 residues long: Heme exporter protein C (49 aa).

Belongs to the CcmC/CycZ/HelC family.

It is found in the cell inner membrane. Its function is as follows. Required for the export of heme to the periplasm for the biogenesis of c-type cytochromes. The protein is Heme exporter protein C of Rhizobium leguminosarum bv. viciae.